Here is a 251-residue protein sequence, read N- to C-terminus: Flap endonuclease Xni (251 aa).

A Mg(2+)-binding site is contributed by aspartate 104. Residues 160–249 (VLPQQLPDYW…IDGNLQQLRL (90 aa)) form the 5'-3' exonuclease domain. Residues leucine 171, alanine 172, proline 180, valine 182, and isoleucine 185 each contribute to the K(+) site. Positions 184–189 (GIGPKS) are interaction with DNA.

Belongs to the Xni family. Mg(2+) is required as a cofactor. The cofactor is K(+).

In terms of biological role, has flap endonuclease activity. During DNA replication, flap endonucleases cleave the 5'-overhanging flap structure that is generated by displacement synthesis when DNA polymerase encounters the 5'-end of a downstream Okazaki fragment. In Citrobacter koseri (strain ATCC BAA-895 / CDC 4225-83 / SGSC4696), this protein is Flap endonuclease Xni.